The chain runs to 175 residues: Alpha-crystallin B chain (175 aa).

At Met-1 the chain carries N-acetylmethionine. Phosphoserine is present on Ser-19. Ser-41 carries O-linked (GlcNAc) serine glycosylation. Phosphoserine occurs at positions 45 and 59. Residues 56-164 (RAPSWFDTGL…PERTIPITRE (109 aa)) enclose the sHSP domain. Zn(2+) is bound at residue His-83. At Lys-92 the chain carries N6-acetyllysine. Residues His-104, Glu-106, His-111, and His-119 each coordinate Zn(2+). Positions 142–175 (VLTVNGPRKQVSGPERTIPITREEKPAVTAAPKK) are disordered. N6-acetyllysine is present on Lys-166. A glycan (O-linked (GlcNAc) threonine) is linked at Thr-170.

The protein belongs to the small heat shock protein (HSP20) family. As to quaternary structure, heteromer composed of three CRYAA and one CRYAB subunits. Aggregates with homologous proteins, including the small heat shock protein HSPB1, to form large heteromeric complexes. Inter-subunit bridging via zinc ions enhances stability, which is crucial as there is no protein turn over in the lens. Interacts with HSPBAP1 and TTN/titin. Interacts with TMEM109; in the cellular response to DNA damage. Interacts with DES; binds rapidly during early stages of DES filament assembly and a reduced binding seen in the later stages. Interacts with TMED10; the interaction mediates the translocation from the cytoplasm into the ERGIC (endoplasmic reticulum-Golgi intermediate compartment) and thereby secretion. Interacts with ATP6V1A and with MTOR, forming a ternary complex.

The protein localises to the cytoplasm. Its subcellular location is the nucleus. It localises to the secreted. The protein resides in the lysosome. In terms of biological role, may contribute to the transparency and refractive index of the lens. Has chaperone-like activity, preventing aggregation of various proteins under a wide range of stress conditions. In lens epithelial cells, stabilizes the ATP6V1A protein, preventing its degradation by the proteasome. The protein is Alpha-crystallin B chain (CRYAB) of Macaca fascicularis (Crab-eating macaque).